The primary structure comprises 271 residues: 2-dehydro-3-deoxyphosphooctonate aldolase (271 aa).

This sequence belongs to the KdsA family.

The protein resides in the cytoplasm. The catalysed reaction is D-arabinose 5-phosphate + phosphoenolpyruvate + H2O = 3-deoxy-alpha-D-manno-2-octulosonate-8-phosphate + phosphate. It functions in the pathway carbohydrate biosynthesis; 3-deoxy-D-manno-octulosonate biosynthesis; 3-deoxy-D-manno-octulosonate from D-ribulose 5-phosphate: step 2/3. It participates in bacterial outer membrane biogenesis; lipopolysaccharide biosynthesis. The sequence is that of 2-dehydro-3-deoxyphosphooctonate aldolase from Campylobacter jejuni subsp. jejuni serotype O:6 (strain 81116 / NCTC 11828).